Here is a 93-residue protein sequence, read N- to C-terminus: Large ribosomal subunit protein uL23cy (93 aa).

The protein belongs to the universal ribosomal protein uL23 family. As to quaternary structure, part of the 50S ribosomal subunit.

The protein localises to the plastid. It is found in the chloroplast. Binds to 23S rRNA. This is Large ribosomal subunit protein uL23cy (rpl23-B) from Agrostis stolonifera (Creeping bentgrass).